Consider the following 332-residue polypeptide: Probable class II chitinase ARB_00204 (332 aa).

The first 18 residues, 1–18 (MKTPFTILAALTVATTLA), serve as a signal peptide directing secretion. Residues 19–331 (DVPDEWDIIE…NPHRKYLDSF (313 aa)) enclose the GH18 domain. The active-site Proton donor is Glu118. N-linked (GlcNAc...) asparagine glycosylation is present at Asn245.

Belongs to the glycosyl hydrolase 18 family. Chitinase class II subfamily.

The protein localises to the secreted. The catalysed reaction is Random endo-hydrolysis of N-acetyl-beta-D-glucosaminide (1-&gt;4)-beta-linkages in chitin and chitodextrins.. Its function is as follows. Degrades chitin and chitotriose. The protein is Probable class II chitinase ARB_00204 of Arthroderma benhamiae (strain ATCC MYA-4681 / CBS 112371) (Trichophyton mentagrophytes).